Here is a 293-residue protein sequence, read N- to C-terminus: N-acetylneuraminate lyase (293 aa).

Residues S48 and S49 each contribute to the aceneuramate site. The active-site Proton donor is Y137. The Schiff-base intermediate with substrate role is filled by K165. Residues T167, G189, D191, E192, and S208 each coordinate aceneuramate.

It belongs to the DapA family. NanA subfamily. In terms of assembly, homotetramer.

The protein resides in the cytoplasm. It catalyses the reaction aceneuramate = aldehydo-N-acetyl-D-mannosamine + pyruvate. It functions in the pathway amino-sugar metabolism; N-acetylneuraminate degradation; D-fructose 6-phosphate from N-acetylneuraminate: step 1/5. Its function is as follows. Catalyzes the reversible aldol cleavage of N-acetylneuraminic acid (sialic acid; Neu5Ac) to form pyruvate and N-acetylmannosamine (ManNAc) via a Schiff base intermediate. This Staphylococcus aureus (strain Mu3 / ATCC 700698) protein is N-acetylneuraminate lyase.